The primary structure comprises 313 residues: Small ribosomal subunit protein uS2 (313 aa).

Basic and acidic residues predominate over residues 233–256 (RTMTDKQSDVAKEAKADGKEEAPK). The segment at 233 to 293 (RTMTDKQSDV…SRKLVAAGTA (61 aa)) is disordered.

It belongs to the universal ribosomal protein uS2 family.

The protein is Small ribosomal subunit protein uS2 of Bdellovibrio bacteriovorus (strain ATCC 15356 / DSM 50701 / NCIMB 9529 / HD100).